Reading from the N-terminus, the 1055-residue chain is Cellulose synthase A catalytic subunit 9 [UDP-forming] (1055 aa).

Residues 1–268 (MEASAGLVAG…ASSKVNPYRM (268 aa)) are Cytoplasmic-facing. Residues C37, C40, C56, C59, C64, C67, C79, and C82 each contribute to the Zn(2+) site. The RING-type; degenerate zinc-finger motif lies at 37-83 (CEICGDEVGRTVDGDLFVACNECGFPVCRPCYEYERREGTQNCPQCK). A helical membrane pass occupies residues 269-289 (VIILRLVVLGFFLRYRILHPV). The Extracellular segment spans residues 290–291 (PD). A helical membrane pass occupies residues 292 to 312 (AIPLWLTSIICEIWFAVSWIL). Residues 313–831 (DQFPKWYPID…LERFSYINTT (519 aa)) are Cytoplasmic-facing. UDP-alpha-D-glucose is bound by residues S351, K357, E358, and D387. D387 is a catalytic residue. A coiled-coil region spans residues 439–468 (NFVQERRAMKREYEEFKVRINALVAKAQKV). A UDP-alpha-D-glucose-binding site is contributed by K528. Residues K529 and D553 each contribute to the Mn(2+) site. D753 is a catalytic residue. The helical transmembrane segment at 832 to 852 (IYPFTSLPLLAYCTLPAVCLL) threads the bilayer. Topologically, residues 853–860 (TGKFIMPP) are extracellular. A helical membrane pass occupies residues 861 to 881 (ISTFASLFFIALFISIFATGI). At 882 to 899 (LEMRWSGVSIEEWWRNEQ) the chain is on the cytoplasmic side. The chain crosses the membrane as a helical span at residues 900 to 920 (FWVIGGVSAHLFAVVQGLLKV). Residues 921 to 951 (LAGIDTNFTVTSKATGDEDDEFAELYAFKWT) lie on the Extracellular side of the membrane. Residue N927 is glycosylated (N-linked (GlcNAc...) asparagine). Residues 952-972 (TLLIPPTTLLILNIIGVVAGV) form a helical membrane-spanning segment. Residues 973-983 (SDAINNGSEAW) are Cytoplasmic-facing. A helical membrane pass occupies residues 984-1004 (GPLFGKLFFAFWVIVHLYPFL). Over 1005 to 1013 (KGLMGRQNR) the chain is Extracellular. A helical transmembrane segment spans residues 1014–1034 (TPTIVVIWSVLLASIFSLLWV). Topologically, residues 1035–1055 (RIDPFTIKARGPDVRQCGINC) are cytoplasmic.

Belongs to the glycosyltransferase 2 family. Plant cellulose synthase subfamily. Mn(2+) serves as cofactor. Zn(2+) is required as a cofactor.

It is found in the cell membrane. It catalyses the reaction [(1-&gt;4)-beta-D-glucosyl](n) + UDP-alpha-D-glucose = [(1-&gt;4)-beta-D-glucosyl](n+1) + UDP + H(+). Its pathway is glycan metabolism; plant cellulose biosynthesis. Its function is as follows. Catalytic subunit of cellulose synthase terminal complexes ('rosettes'), required for beta-1,4-glucan microfibril crystallization, a major mechanism of the cell wall formation. Involved in the secondary cell wall formation. This Oryza sativa subsp. indica (Rice) protein is Cellulose synthase A catalytic subunit 9 [UDP-forming] (CESA9).